Reading from the N-terminus, the 191-residue chain is Crossover junction endodeoxyribonuclease RuvC (191 aa).

Catalysis depends on residues Asp-7, Glu-67, and Asp-141. Mg(2+)-binding residues include Asp-7, Glu-67, and Asp-141.

This sequence belongs to the RuvC family. As to quaternary structure, homodimer which binds Holliday junction (HJ) DNA. The HJ becomes 2-fold symmetrical on binding to RuvC with unstacked arms; it has a different conformation from HJ DNA in complex with RuvA. In the full resolvosome a probable DNA-RuvA(4)-RuvB(12)-RuvC(2) complex forms which resolves the HJ. The cofactor is Mg(2+).

The protein resides in the cytoplasm. The enzyme catalyses Endonucleolytic cleavage at a junction such as a reciprocal single-stranded crossover between two homologous DNA duplexes (Holliday junction).. Functionally, the RuvA-RuvB-RuvC complex processes Holliday junction (HJ) DNA during genetic recombination and DNA repair. Endonuclease that resolves HJ intermediates. Cleaves cruciform DNA by making single-stranded nicks across the HJ at symmetrical positions within the homologous arms, yielding a 5'-phosphate and a 3'-hydroxyl group; requires a central core of homology in the junction. The consensus cleavage sequence is 5'-(A/T)TT(C/G)-3'. Cleavage occurs on the 3'-side of the TT dinucleotide at the point of strand exchange. HJ branch migration catalyzed by RuvA-RuvB allows RuvC to scan DNA until it finds its consensus sequence, where it cleaves and resolves the cruciform DNA. The polypeptide is Crossover junction endodeoxyribonuclease RuvC (Myxococcus xanthus (strain DK1622)).